Consider the following 200-residue polypeptide: High frequency lysogenization protein HflD homolog (200 aa).

The protein belongs to the HflD family.

Its subcellular location is the cytoplasm. It is found in the cell inner membrane. In Pseudoalteromonas translucida (strain TAC 125), this protein is High frequency lysogenization protein HflD homolog.